Consider the following 149-residue polypeptide: Arginine repressor (149 aa).

The protein belongs to the ArgR family.

The protein localises to the cytoplasm. Its pathway is amino-acid biosynthesis; L-arginine biosynthesis [regulation]. In terms of biological role, regulates arginine biosynthesis genes. The sequence is that of Arginine repressor from Listeria welshimeri serovar 6b (strain ATCC 35897 / DSM 20650 / CCUG 15529 / CIP 8149 / NCTC 11857 / SLCC 5334 / V8).